The primary structure comprises 329 residues: Acetyl-coenzyme A carboxylase carboxyl transferase subunit alpha (329 aa).

The region spanning Gln-40–Glu-294 is the CoA carboxyltransferase C-terminal domain.

The protein belongs to the AccA family. As to quaternary structure, acetyl-CoA carboxylase is a heterohexamer composed of biotin carboxyl carrier protein (AccB), biotin carboxylase (AccC) and two subunits each of ACCase subunit alpha (AccA) and ACCase subunit beta (AccD).

It is found in the cytoplasm. The catalysed reaction is N(6)-carboxybiotinyl-L-lysyl-[protein] + acetyl-CoA = N(6)-biotinyl-L-lysyl-[protein] + malonyl-CoA. It functions in the pathway lipid metabolism; malonyl-CoA biosynthesis; malonyl-CoA from acetyl-CoA: step 1/1. Functionally, component of the acetyl coenzyme A carboxylase (ACC) complex. First, biotin carboxylase catalyzes the carboxylation of biotin on its carrier protein (BCCP) and then the CO(2) group is transferred by the carboxyltransferase to acetyl-CoA to form malonyl-CoA. This chain is Acetyl-coenzyme A carboxylase carboxyl transferase subunit alpha, found in Synechococcus sp. (strain CC9902).